The following is a 233-amino-acid chain: Chaperone protein MrkB (233 aa).

The first 18 residues, 1-18 (MKRIALFFCFIFSFAAHA), serve as a signal peptide directing secretion.

This sequence belongs to the periplasmic pilus chaperone family.

It localises to the periplasm. Mediates assembly of pili by forming soluble multimeric complexes with pili subunits as an intermediate step in the assembly process. This protein is involved in type 3 pili assembly. In Klebsiella pneumoniae, this protein is Chaperone protein MrkB (mrkB).